A 465-amino-acid chain; its full sequence is Apolipoprotein N-acyltransferase (465 aa).

Transmembrane regions (helical) follow at residues 12–32 (AVLGGLLAGLAPGVAGPLSML), 49–69 (ALWGLFGVLLSHRWLLGLHPL), 80–100 (LPVAVAIWLSCGVAAALLLLL), 122–142 (LLALVWGAAELLLEGSPLFWI), 161–181 (WLGSGGLATLQLLWGWGLWQL), and 189–209 (CAWWLISLLLAHAMGALSLSP). The CN hydrolase domain occupies 221-448 (WQPAIPTREK…DAVAAAELQR (228 aa)). The active-site Proton acceptor is the E262. The active site involves K312. C360 acts as the Nucleophile in catalysis.

This sequence belongs to the CN hydrolase family. Apolipoprotein N-acyltransferase subfamily.

The protein localises to the cell inner membrane. The catalysed reaction is N-terminal S-1,2-diacyl-sn-glyceryl-L-cysteinyl-[lipoprotein] + a glycerophospholipid = N-acyl-S-1,2-diacyl-sn-glyceryl-L-cysteinyl-[lipoprotein] + a 2-acyl-sn-glycero-3-phospholipid + H(+). It participates in protein modification; lipoprotein biosynthesis (N-acyl transfer). Functionally, catalyzes the phospholipid dependent N-acylation of the N-terminal cysteine of apolipoprotein, the last step in lipoprotein maturation. The protein is Apolipoprotein N-acyltransferase of Parasynechococcus marenigrum (strain WH8102).